Reading from the N-terminus, the 300-residue chain is Geranylgeranyl pyrophosphate synthase (300 aa).

Residue methionine 1 is modified to N-acetylmethionine. The isopentenyl diphosphate site is built by lysine 25, arginine 28, and histidine 57. Mg(2+)-binding residues include aspartate 64 and aspartate 68. Arginine 73 contacts dimethylallyl diphosphate. Isopentenyl diphosphate is bound at residue arginine 74. Dimethylallyl diphosphate contacts are provided by lysine 151, threonine 152, glutamine 185, lysine 202, and lysine 212.

This sequence belongs to the FPP/GGPP synthase family. Homohexamer; trimer of homodimers. It depends on Mg(2+) as a cofactor.

It localises to the cytoplasm. The protein resides in the perinuclear region. The protein localises to the myofibril. Its subcellular location is the sarcomere. It is found in the z line. The enzyme catalyses isopentenyl diphosphate + dimethylallyl diphosphate = (2E)-geranyl diphosphate + diphosphate. The catalysed reaction is isopentenyl diphosphate + (2E)-geranyl diphosphate = (2E,6E)-farnesyl diphosphate + diphosphate. It catalyses the reaction isopentenyl diphosphate + (2E,6E)-farnesyl diphosphate = (2E,6E,10E)-geranylgeranyl diphosphate + diphosphate. It participates in isoprenoid biosynthesis; farnesyl diphosphate biosynthesis; farnesyl diphosphate from geranyl diphosphate and isopentenyl diphosphate: step 1/1. It functions in the pathway isoprenoid biosynthesis; geranyl diphosphate biosynthesis; geranyl diphosphate from dimethylallyl diphosphate and isopentenyl diphosphate: step 1/1. The protein operates within isoprenoid biosynthesis; geranylgeranyl diphosphate biosynthesis; geranylgeranyl diphosphate from farnesyl diphosphate and isopentenyl diphosphate: step 1/1. In terms of biological role, catalyzes the trans-addition of the three molecules of isopentenyl diphosphate (IPP) onto dimethylallyl pyrophosphate (DMAPP) to form geranylgeranyl pyrophosphate, an important precursor of carotenoids and geranylated proteins. This chain is Geranylgeranyl pyrophosphate synthase, found in Mus musculus (Mouse).